A 426-amino-acid chain; its full sequence is Kynureninase (426 aa).

Pyridoxal 5'-phosphate-binding positions include Leu110, Ser111, 138 to 141 (FPSD), Asp223, His226, and Tyr248. The residue at position 249 (Lys249) is an N6-(pyridoxal phosphate)lysine. Residues Trp279 and Asn307 each coordinate pyridoxal 5'-phosphate.

This sequence belongs to the kynureninase family. In terms of assembly, homodimer. The cofactor is pyridoxal 5'-phosphate.

It carries out the reaction L-kynurenine + H2O = anthranilate + L-alanine + H(+). The catalysed reaction is 3-hydroxy-L-kynurenine + H2O = 3-hydroxyanthranilate + L-alanine + H(+). It functions in the pathway amino-acid degradation; L-kynurenine degradation; L-alanine and anthranilate from L-kynurenine: step 1/1. Its pathway is cofactor biosynthesis; NAD(+) biosynthesis; quinolinate from L-kynurenine: step 2/3. Its function is as follows. Catalyzes the cleavage of L-kynurenine (L-Kyn) and L-3-hydroxykynurenine (L-3OHKyn) into anthranilic acid (AA) and 3-hydroxyanthranilic acid (3-OHAA), respectively. This is Kynureninase from Myxococcus xanthus (strain DK1622).